The following is a 575-amino-acid chain: Jasmonoyl--L-amino acid synthetase JAR1 (575 aa).

Residues 10 to 30 are a coiled coil; it reads MNRVIDEFDEMTRNAHQVQKQ. Ser-98 contacts ATP. Ser-101 contacts jasmonate. ATP contacts are provided by residues Met-118, Thr-121, Gly-163, Asn-168, and 331–336; that span reads GSSEGW. An L-alpha-amino acid is bound at residue 166 to 170; it reads TTNVY. 328–331 is a jasmonate binding site; the sequence is HDYG. 530-534 provides a ligand contact to an L-alpha-amino acid; that stretch reads KIQEH. Lys-557 lines the ATP pocket.

This sequence belongs to the IAA-amido conjugating enzyme family. Interacts with GSTU20/FIP1 under continuous far red (cFR) light; this binding increases its activity and determines the priority of substrate binding.

The protein localises to the cytoplasm. The enzyme catalyses a jasmonate + an L-alpha-amino acid + ATP = a jasmonyl-L-amino acid + AMP + diphosphate + H(+). The catalysed reaction is (+)-7-isojasmonate + L-isoleucine + ATP = L-isoleucine-(+)-7-isojasmonate + AMP + diphosphate + H(+). Activated by GSTU20/FIP1. In terms of biological role, catalyzes the synthesis of jasmonates-amino acid conjugates by adenylation; can use Ile and, in vitro at least, Val, Leu and Phe as conjugating amino acids on jasmonic acid (JA) and 9,10-dihydro-JA substrates, and to a lower extent, on 3-oxo-2-(2Z-pentenyl)-cyclopentane-1-butyric acid (OPC-4) and 12-hydroxy-JA (12-OH-JA). Can synthesize adenosine 5-tetraphosphate in vitro. Required for the JA-mediated signaling pathway that regulates many developmental and defense mechanisms, including growth root inhibition, vegetative storage proteins (VSPs) accumulation, induced systemic resistance (ISR), response to wounding and herbivores, tolerance to ozone O(3) (probably having a role in lesion containment). Plays an important role in the accumulation of JA-Ile in response to wounding, both locally and systemically; promotes JA responding genes especially in distal part of wounded plants, via the JA-Ile-stimulated degradation of JAZ repressor proteins by the SCF(COI)E3 ubiquitin-protein ligase pathway. Involved in the apoptosis-like programmed cell death (PCD) induced by fungal toxin fumonisin B1-mediated (FB1). Required for volatile compounds (C6-aldehydes and allo-ocimene)-mediated defense activation. Involved in the non-pathogenic rhizobacterium-mediated ISR (defense priming) by P.fluorescens (strains CHAOr and WCS417r) and P.putida LSW17S against infection leaf pathogens such as P.syringae pv. tomato and H.parasitica. Required for the JA-dependent resistance to fungi such as P.irregulare, U.vignae and U.appendiculatus. Necessary to induce systemic resistance against R.solanaceraum and P.syringae pv. tomato with P.oligandrum (a non-pathogenic biocontrol agent) cell wall protein fraction (CWP). Mediates PGIP2 accumulation in response to B.cinerea infection and thus contributes to resistance against this pathogen. Modulates the UV-B alteration of leaves attractiveness to diamondback moths P.xylostella leading to insect oviposition. Involved in the regulation of far-red light influence on development, being an actor of the interplay between light and JA signaling. Seems necessary for the salicylic acid (SA)-mediated, NPR1-independent resistance pathway. May contribute to the chitin-elicited pathway. Contributes to the sensitivity toward F.graminearum. This Arabidopsis thaliana (Mouse-ear cress) protein is Jasmonoyl--L-amino acid synthetase JAR1.